A 241-amino-acid polypeptide reads, in one-letter code: 3-oxoacyl-[acyl-carrier-protein] reductase FabG (241 aa).

Residues 13–16 (GASG), Ser-38, 57–58 (EI), and Asn-83 each bind NADP(+). Substrate is bound at residue Ser-135. Catalysis depends on Tyr-148, which acts as the Proton acceptor. Residues 148–152 (YCASK) and Ile-181 contribute to the NADP(+) site.

This sequence belongs to the short-chain dehydrogenases/reductases (SDR) family. In terms of assembly, homotetramer.

It carries out the reaction a (3R)-hydroxyacyl-[ACP] + NADP(+) = a 3-oxoacyl-[ACP] + NADPH + H(+). It functions in the pathway lipid metabolism; fatty acid biosynthesis. Functionally, catalyzes the NADPH-dependent reduction of beta-ketoacyl-ACP substrates to beta-hydroxyacyl-ACP products, the first reductive step in the elongation cycle of fatty acid biosynthesis. This chain is 3-oxoacyl-[acyl-carrier-protein] reductase FabG (fabG), found in Rickettsia felis (strain ATCC VR-1525 / URRWXCal2) (Rickettsia azadi).